The sequence spans 303 residues: MNPLCSELKSGRNAPPAAIGQVLIEALPYIRKFEGKTFVIKYGGSAMKDDKLKNSFAQNVTLLRKVGINVVLVHGGGDAITRTAEKMGLSSRFHHGKRVTDIEMISVVQMTLAGKVNQDIVRLISEHGGKAVGVTGLDADTIKAIPCQNADKLGLVGDVESINTLYIDLLCRAGLIPVIAPIGYDEDGSIYNINADDAASSIAIALKAEKLIYVSDVEGIHVGERILKTICKAEAADFIEQGIISGGMIPKVLSAFKTLDGGVGKIHLIDGKFTHSLLLEIFTHEGVGTQFIAEQDNDNPGKR.

Substrate contacts are provided by residues 76–77 (GG), R98, and N192.

This sequence belongs to the acetylglutamate kinase family. ArgB subfamily.

The protein localises to the cytoplasm. It catalyses the reaction N-acetyl-L-glutamate + ATP = N-acetyl-L-glutamyl 5-phosphate + ADP. It functions in the pathway amino-acid biosynthesis; L-arginine biosynthesis; N(2)-acetyl-L-ornithine from L-glutamate: step 2/4. Its function is as follows. Catalyzes the ATP-dependent phosphorylation of N-acetyl-L-glutamate. This chain is Acetylglutamate kinase, found in Chlorobium phaeobacteroides (strain DSM 266 / SMG 266 / 2430).